We begin with the raw amino-acid sequence, 353 residues long: uncharacterized protein (353 aa).

The N-terminal stretch at 1–30 (MHLRHLFSPRLRGSLLLGSLLVASSFSTLA) is a signal peptide.

This is an uncharacterized protein from Salmonella typhimurium (strain LT2 / SGSC1412 / ATCC 700720).